The primary structure comprises 757 residues: Centrosomal protein of 68 kDa (757 aa).

Composition is skewed to basic and acidic residues over residues methionine 1–lysine 17 and alanine 86–glutamate 96. Disordered regions lie at residues methionine 1 to alanine 47, tryptophan 67 to alanine 158, glutamine 192 to alanine 259, proline 311 to aspartate 480, proline 509 to proline 551, and leucine 597 to glutamine 618. Residues leucine 125–cysteine 144 show a composition bias toward polar residues. 2 stretches are compositionally biased toward low complexity: residues glutamine 192 to serine 206 and valine 224 to valine 240. Residue serine 332 is modified to Phosphoserine; by PLK1. The segment covering phenylalanine 339–proline 355 has biased composition (polar residues). Basic and acidic residues-rich tracts occupy residues glycine 405 to aspartate 432 and arginine 439 to threonine 456. The span at serine 457 to glutamate 467 shows a compositional bias: polar residues. Serine 472 and serine 478 each carry phosphoserine. Residues serine 524–alanine 543 show a composition bias toward low complexity.

As to quaternary structure, interacts with CNTLN; the interaction recruits CEP68 to the centrosome. Interacts with the SCF(FBXW11) complex which contains SKP1, CUL1 and FBXW11; the interaction is probably mediated by FBXW11 and the complex also contains CDK5RAP2 and PCNT. Also interacts with F-box protein BTRC. Interacts with serine/threonine-protein kinase PLK1; the interaction leads to phosphorylation of CEP68 and its subsequent degradation. Interacts with NEK2; the interaction leads to phosphorylation of CEP68. Post-translationally, phosphorylation by PLK1 is required for binding to BTRC in prometaphase. Phosphorylated directly or indirectly by NEK2. NEK2-mediated phosphorylation promotes CEP68 dissociation from the centrosome and its degradation at the onset of mitosis. In terms of processing, ubiquitinated and targeted for proteasomal degradation in early mitosis by the SCF(BTRC) and/or SCF(FBXW11) E3 ubiquitin-protein ligase complexes. Degradation is complete by prometaphase and is required for removal of CDK5RAP2 from the peripheral pericentriolar material and subsequent centriole separation.

It localises to the cytoplasm. The protein localises to the cytoskeleton. Its subcellular location is the microtubule organizing center. It is found in the centrosome. Its function is as follows. Involved in maintenance of centrosome cohesion, probably as part of a linker structure which prevents centrosome splitting. Required for localization of CDK5RAP2 to the centrosome during interphase. Contributes to CROCC/rootletin filament formation. The chain is Centrosomal protein of 68 kDa (CEP68) from Homo sapiens (Human).